The sequence spans 201 residues: Keratin-associated protein 4-12 (201 aa).

A run of 30 repeats spans residues 5–9 (CCGSV), 20–24 (CCRPS), 25–29 (CCQTT), 30–34 (CCRTT), 35–39 (CCRPS), 40–44 (CCVSS), 45–49 (CCRPQ), 50–54 (CCQSV), 55–59 (CCQPT), 60–64 (CCRPS), 65–69 (CCQTT), 70–74 (CCRTT), 75–79 (CCRPS), 80–84 (CCVSS), 85–89 (CCRPQ), 90–94 (CCQSV), 95–99 (CCQPT), 100–104 (CCRPS), 105–109 (CCQTT), 110–114 (CCRTT), 115–119 (CCRPS), 120–124 (CCVSS), 125–129 (CCRPQ), 130–134 (CCQSV), 135–139 (CCQPT), 140–144 (CCRPS), 145–149 (CCISS), 155–159 (CCESS), 160–164 (CCRPC), and 165–169 (CCLRP). The 31 X 5 AA repeats of C-C-[GRQVIL]-[SPTR]-[VSTQPC] stretch occupies residues 5-169 (CCGSVCSDQG…CCRPCCCLRP (165 aa)).

It belongs to the KRTAP type 4 family. In terms of assembly, interacts with hair keratins. As to expression, expressed in the hair follicles.

Its function is as follows. In the hair cortex, hair keratin intermediate filaments are embedded in an interfilamentous matrix, consisting of hair keratin-associated proteins (KRTAP), which are essential for the formation of a rigid and resistant hair shaft through their extensive disulfide bond cross-linking with abundant cysteine residues of hair keratins. The matrix proteins include the high-sulfur and high-glycine-tyrosine keratins. This Homo sapiens (Human) protein is Keratin-associated protein 4-12 (KRTAP4-12).